A 956-amino-acid chain; its full sequence is Plasma membrane ATPase 3 (956 aa).

The Cytoplasmic segment spans residues 1 to 65 (MGEKPEVLDA…EKKESKFSKF (65 aa)). Residues 66-85 (LGFMWNPLSWVMEAAAIMAI) traverse the membrane as a helical segment. Residues 86–97 (ALANGGGKPPDW) lie on the Extracellular side of the membrane. The helical transmembrane segment at 98 to 118 (QDFVGIITLLIINSTISFIEE) threads the bilayer. The Cytoplasmic portion of the chain corresponds to 119-247 (NNAGNAAAAL…GHFQKVLTAI (129 aa)). The helical transmembrane segment at 248 to 268 (GNFCICSIAVGMIIEIIVMYP) threads the bilayer. The Extracellular portion of the chain corresponds to 269–278 (IQHRKYRPGI). Residues 279–300 (DNLLVLLIGGIPIAMPTVLSVT) traverse the membrane as a helical segment. Residues 301–647 (MAIGSHRLAQ…TSRAIFQRMK (347 aa)) lie on the Cytoplasmic side of the membrane. D333 (4-aspartylphosphate intermediate) is an active-site residue. Mg(2+) contacts are provided by D592 and D596. Residues 648–669 (NYTIYAVSITIRIVLGFMLLAL) traverse the membrane as a helical segment. Residues 670 to 674 (IWQFD) are Extracellular-facing. Residues 675 to 697 (FPPFMVLIIAILNDGTIMTISKD) traverse the membrane as a helical segment. Residues 698–713 (RVKPSPLPDSWKLAEI) lie on the Cytoplasmic side of the membrane. The helical transmembrane segment at 714–734 (FTTGVVLGGYLAMMTVIFFWA) threads the bilayer. Residues 735-759 (AYKTNFFPRVFGVSTLEKTATDDFR) lie on the Extracellular side of the membrane. A helical membrane pass occupies residues 760-780 (KLASAIYLQVSTISQALIFVT). Over 781–792 (RSRSWSFMERPG) the chain is Cytoplasmic. A helical membrane pass occupies residues 793-813 (LLLVVAFFIAQLVATLIAVYA). At 814–822 (NWSFAAIEG) the chain is on the extracellular side. Residues 823-843 (IGWGWAGVIWLYNIVFYIPLD) form a helical membrane-spanning segment. Residues 844-956 (LXXFLIRYAL…IETIQQAYTV (113 aa)) are Cytoplasmic-facing.

It belongs to the cation transport ATPase (P-type) (TC 3.A.3) family. Type IIIA subfamily. In terms of tissue distribution, expressed in roots, stems, leaves from both vegetative and flowering plants, and flowers at early and late stages of development with highest expression levels found in flowers and root tissue.

The protein resides in the cell membrane. The enzyme catalyses ATP + H2O + H(+)(in) = ADP + phosphate + 2 H(+)(out). In terms of biological role, the plasma membrane ATPase of plants and fungi is a hydrogen ion pump. The proton gradient it generates drives the active transport of nutrients by H(+)-symport. The resulting external acidification and/or internal alkinization may mediate growth responses. In Nicotiana plumbaginifolia (Leadwort-leaved tobacco), this protein is Plasma membrane ATPase 3 (PMA3).